The following is a 463-amino-acid chain: Annexin A7 (463 aa).

Pro residues-rich tracts occupy residues Met1–Pro18 and Phe26–Phe38. Disordered stretches follow at residues Met1–Tyr54 and Gly71–Thr153. The segment at Met1–Pro140 is repeat-rich region. Residues Gly5–Thr20 are 3 X 5 AA tandem repeats of G-Y-P-P-X. Residues Gly86–Phe99 show a composition bias toward gly residues. Annexin repeat units lie at residues Phe160–Met231, Pro232–Gln303, Gln315–Gln387, and Asn391–Gly462. The residue at position 208 (Lys208) is an N6-acetyllysine.

Belongs to the annexin family. Interacts with PDCD6.

Functionally, calcium/phospholipid-binding protein which promotes membrane fusion and is involved in exocytosis. This is Annexin A7 (ANXA7) from Bos taurus (Bovine).